The following is a 171-amino-acid chain: Putative auxin-responsive protein IAA29 (171 aa).

The 96-residue stretch at 19-114 (SRFVKVFMHG…TVKKIYIVPA (96 aa)) folds into the PB1 domain. Residues 117 to 171 (QNENDYQEEEEDNAAAAATADEDGDGAAADDGVAAAADDVDDVAGYTSNDDPSFD) form a disordered region. Residues 142-153 (GAAADDGVAAAA) are compositionally biased toward low complexity. Polar residues predominate over residues 162-171 (YTSNDDPSFD).

The protein belongs to the Aux/IAA family. In terms of assembly, homodimers and heterodimers.

It is found in the nucleus. Functionally, aux/IAA proteins are short-lived transcriptional factors that function as repressors of early auxin response genes at low auxin concentrations. This chain is Putative auxin-responsive protein IAA29 (IAA29), found in Oryza sativa subsp. japonica (Rice).